Here is a 214-residue protein sequence, read N- to C-terminus: MQPMFDRERNGLDTTGLGLIPMVIETSGRGERAYDIYSRLLRERIIFLVGPVTETSANLVIAQLLFLESENSEKDIFLYINSPGGLVTAGLAVYDTIQFIKPDVSTLCVGQAASMGAFLLTAGAKGKRYCLPNSRVMIHQPLGGFQGQASDIEIHAKEILALKSRLNEIMAKHTGQTVKAIERDTDRDNFLGAEAAVKYGLVDAVLTSREVKQE.

Serine 114 serves as the catalytic Nucleophile. The active site involves histidine 139.

This sequence belongs to the peptidase S14 family. As to quaternary structure, fourteen ClpP subunits assemble into 2 heptameric rings which stack back to back to give a disk-like structure with a central cavity, resembling the structure of eukaryotic proteasomes.

The protein localises to the cytoplasm. It catalyses the reaction Hydrolysis of proteins to small peptides in the presence of ATP and magnesium. alpha-casein is the usual test substrate. In the absence of ATP, only oligopeptides shorter than five residues are hydrolyzed (such as succinyl-Leu-Tyr-|-NHMec, and Leu-Tyr-Leu-|-Tyr-Trp, in which cleavage of the -Tyr-|-Leu- and -Tyr-|-Trp bonds also occurs).. Functionally, cleaves peptides in various proteins in a process that requires ATP hydrolysis. Has a chymotrypsin-like activity. Plays a major role in the degradation of misfolded proteins. The chain is ATP-dependent Clp protease proteolytic subunit from Nitrosomonas europaea (strain ATCC 19718 / CIP 103999 / KCTC 2705 / NBRC 14298).